The sequence spans 417 residues: Tryptophan synthase beta chain (417 aa).

An N6-(pyridoxal phosphate)lysine modification is found at Lys-99.

Belongs to the TrpB family. As to quaternary structure, tetramer of two alpha and two beta chains. The cofactor is pyridoxal 5'-phosphate.

The catalysed reaction is (1S,2R)-1-C-(indol-3-yl)glycerol 3-phosphate + L-serine = D-glyceraldehyde 3-phosphate + L-tryptophan + H2O. It participates in amino-acid biosynthesis; L-tryptophan biosynthesis; L-tryptophan from chorismate: step 5/5. In terms of biological role, the beta subunit is responsible for the synthesis of L-tryptophan from indole and L-serine. The polypeptide is Tryptophan synthase beta chain (trpB) (Corynebacterium glutamicum (strain ATCC 13032 / DSM 20300 / JCM 1318 / BCRC 11384 / CCUG 27702 / LMG 3730 / NBRC 12168 / NCIMB 10025 / NRRL B-2784 / 534)).